The following is a 672-amino-acid chain: Forkhead box protein O3 (672 aa).

2 disordered regions span residues 1-85 and 110-152; these read MAEA…GVSS and GPAS…CSSR. S30 carries the phosphoserine modification. At T32 the chain carries Phosphothreonine. K46 carries the N6-methyllysine modification. Residues 57 to 68 show a composition bias toward acidic residues; the sequence is IPEEDDDEDDED. A required for mitochondrial import region spans residues 80 to 108; it reads GGGVSSTLGSGLLLEDSAMLLAPGGQDLG. Residues 110 to 129 show a composition bias toward low complexity; it reads GPASAAGALSGGTPTQLQPQ. Position 148 is an N6-methyllysine (K148). Positions 156–250 form a DNA-binding region, fork-head; sequence WGNLSYADLI…KSGKAPRRRA (95 aa). T178 is subject to Phosphothreonine. Phosphoserine occurs at positions 208 and 214. At K229 the chain carries N6-methyllysine. Residues 230 to 301 are disordered; it reads SSWWIINPDG…GSPTSRSSDE (72 aa). K241 is modified (N6-acetyllysine). Positions 241–258 match the Nuclear localization signal motif; sequence KSGKAPRRRAVSMDNSNK. S252 carries the phosphoserine modification. Positions 260 to 271 are enriched in basic residues; sequence TKSRGRAAKKKA. Residues K261 and K270 each carry the N6-methyllysine modification. Residues S279 and S283 each carry the phosphoserine modification. Residues 282-297 are compositionally biased toward polar residues; sequence DSPSQLSKWPGSPTSR. K289 is subject to N6-methyllysine. S293 carries the phosphoserine modification. Position 298 is a phosphoserine; by CaMK2A (S298). The mediates interaction with CHUK/IKKA and IKBKB/IKKB stretch occupies residues 299–672; that stretch reads SDELDAWTDF…QASSQSWVPG (374 aa). S310 carries the post-translational modification Phosphoserine. S314 is subject to Phosphoserine; by SGK1. Phosphoserine; by AMPK is present on residues S398 and S412. Disordered stretches follow at residues 399-441 and 535-583; these read QPSP…SLNS and HQHQ…QTLS. Polar residues-rich tracts occupy residues 409–441 and 548–577; these read RGSS…SLNS and ALSN…PASQ. The residue at position 418 (K418) is an N6-methyllysine. Residue S420 is modified to Phosphoserine. At S550 the chain carries Phosphoserine; by MAPKAPK5. Position 554 is a phosphoserine; by AMPK and MAPKAPK5 (S554). Phosphoserine; by AMPK is present on residues S587 and S625. Position 643 is a phosphoserine; by IKKB (S643).

Upon metabolic stress, forms a complex composed of FOXO3, SIRT3 and mitochondrial RNA polymerase POLRMT; the complex is recruited to mtDNA in a SIRT3-dependent manner. Also forms a complex composed of FOXO3, SIRT3, TFAM and POLRMT. Interacts with SIRT2; the interaction occurs independently of SIRT2 deacetylase activity. Interacts with YWHAB/14-3-3-beta and YWHAZ/14-3-3-zeta, which are required for cytosolic sequestration. Upon oxidative stress, interacts with STK4/MST1, which disrupts interaction with YWHAB/14-3-3-beta and leads to nuclear translocation. Interacts with PIM1. Interacts with DDIT3/CHOP. Interacts (deacetylated form) with SKP2. Interacts with CHUK and IKBKB. Interacts with CAMK2A, CAMK2B and calcineurin A. Interacts with NUPR1; this interaction represses FOXO3 transactivation. Deacetylation by SIRT1 or SIRT2 stimulates interaction of FOXO3 with SKP2 and facilitates SCF(SKP2)-mediated FOXO3 ubiquitination and proteasomal degradation. Deacetylation by SIRT2 stimulates FOXO3-mediated transcriptional activity in response to oxidative stress. Deacetylated by SIRT3. Deacetylation by SIRT3 stimulates FOXO3-mediated mtDNA transcriptional activity in response to metabolic stress. In terms of processing, in the presence of survival factors such as IGF1, phosphorylated on Thr-32 and Ser-252 by AKT1/PKB. This phosphorylated form then interacts with 14-3-3 proteins and is retained in the cytoplasm. Survival factor withdrawal induces dephosphorylation and promotes translocation to the nucleus where the dephosphorylated protein induces transcription of target genes and triggers apoptosis. Although AKT1/PKB doesn't appear to phosphorylate Ser-314 directly, it may activate other kinases that trigger phosphorylation at this residue. Phosphorylated by STK4/MST1 on Ser-208 upon oxidative stress, which leads to dissociation from YWHAB/14-3-3-beta and nuclear translocation. Phosphorylated by PIM1. Phosphorylation by AMPK leads to the activation of transcriptional activity without affecting subcellular localization. Phosphorylated by AMPK on Ser-30 in response to metabolic stress which mediates FOXO3 mitochondrial translocation. Phosphorylation by MAPKAPK5 promotes nuclear localization and DNA-binding, leading to induction of miR-34b and miR-34c expression, 2 post-transcriptional regulators of MYC that bind to the 3'UTR of MYC transcript and prevent its translation. Phosphorylated by CHUK/IKKA and IKBKB/IKKB. TNF-induced inactivation of FOXO3 requires its phosphorylation at Ser-643 by IKBKB/IKKB which promotes FOXO3 retention in the cytoplasm, polyubiquitination and ubiquitin-mediated proteasomal degradation. May be dephosphorylated by calcineurin A on Ser-298 which abolishes FOXO3 transcriptional activity. Phosphorylation at Ser-252 promotes its degradation by the proteasome. Dephosphorylation at Ser-252 by protein phosphatase 2A (PPP2CA) promotes its stabilization; interaction with PPP2CA is enhanced by AMBRA1. Post-translationally, heavily methylated by SET9 which decreases stability, while moderately increasing transcriptional activity. The main methylation site is Lys-270. Methylation doesn't affect subcellular location. Polyubiquitinated. Ubiquitinated by a SCF complex containing SKP2, leading to proteasomal degradation. In terms of processing, the N-terminus is cleaved following import into the mitochondrion. Expressed in white and brown adipose tissues (at protein level). Expressed in liver, kidney, lung and colon (at protein level). Expressed in skeletal muscles (at protein level).

It is found in the cytoplasm. The protein localises to the cytosol. It localises to the nucleus. Its subcellular location is the mitochondrion matrix. The protein resides in the mitochondrion outer membrane. Functionally, transcriptional activator that recognizes and binds to the DNA sequence 5'-[AG]TAAA[TC]A-3' and regulates different processes, such as apoptosis and autophagy. Acts as a positive regulator of autophagy in skeletal muscle: in starved cells, enters the nucleus following dephosphorylation and binds the promoters of autophagy genes, such as GABARAP1L, MAP1LC3B and ATG12, thereby activating their expression, resulting in proteolysis of skeletal muscle proteins. Triggers apoptosis in the absence of survival factors, including neuronal cell death upon oxidative stress. Participates in post-transcriptional regulation of MYC: following phosphorylation by MAPKAPK5, promotes induction of miR-34b and miR-34c expression, 2 post-transcriptional regulators of MYC that bind to the 3'UTR of MYC transcript and prevent its translation. In response to metabolic stress, translocates into the mitochondria where it promotes mtDNA transcription. Also acts as a key regulator of chondrogenic commitment of skeletal progenitor cells in response to lipid availability: when lipids levels are low, translocates to the nucleus and promotes expression of SOX9, which induces chondrogenic commitment and suppresses fatty acid oxidation. Also acts as a key regulator of regulatory T-cells (Treg) differentiation by activating expression of FOXP3. The sequence is that of Forkhead box protein O3 from Mus musculus (Mouse).